We begin with the raw amino-acid sequence, 205 residues long: MQQKLETGIRQLGLDLPAEVTEKLLAYLALLAKWNKVHNLTAVRDPEDMVTLHLLDSLSVLPHVPSGSLLDVGSGAGLPGIVLAICRPDLQVTTIDAVQKKASFMRQAKAELQIDNLQVVAGRVEQFEPEAPFDTVISRAFSEIALFVKLTRHLMAEDGLWLAMKGQMPQEELGAVALKPAKIMSLIVPGLDAQRHLVFLPARQF.

S-adenosyl-L-methionine-binding positions include Gly-73, Leu-78, 124–125 (VE), and Arg-139.

This sequence belongs to the methyltransferase superfamily. RNA methyltransferase RsmG family.

The protein localises to the cytoplasm. The catalysed reaction is guanosine(527) in 16S rRNA + S-adenosyl-L-methionine = N(7)-methylguanosine(527) in 16S rRNA + S-adenosyl-L-homocysteine. Its function is as follows. Specifically methylates the N7 position of guanine in position 527 of 16S rRNA. The protein is Ribosomal RNA small subunit methyltransferase G of Methylobacillus flagellatus (strain ATCC 51484 / DSM 6875 / VKM B-1610 / KT).